Here is a 209-residue protein sequence, read N- to C-terminus: Orotate phosphoribosyltransferase (209 aa).

Residues arginine 96, lysine 100, histidine 102, and 122-130 each bind 5-phospho-alpha-D-ribose 1-diphosphate; that span reads EDLISTGGS. Orotate is bound at residue serine 126.

It belongs to the purine/pyrimidine phosphoribosyltransferase family. PyrE subfamily. In terms of assembly, homodimer. The cofactor is Mg(2+).

It catalyses the reaction orotidine 5'-phosphate + diphosphate = orotate + 5-phospho-alpha-D-ribose 1-diphosphate. The protein operates within pyrimidine metabolism; UMP biosynthesis via de novo pathway; UMP from orotate: step 1/2. In terms of biological role, catalyzes the transfer of a ribosyl phosphate group from 5-phosphoribose 1-diphosphate to orotate, leading to the formation of orotidine monophosphate (OMP). The chain is Orotate phosphoribosyltransferase from Streptococcus agalactiae serotype III (strain NEM316).